A 128-amino-acid chain; its full sequence is MTSIVDLTPSEPALIFTGNAAAKVSELIAEEGNPALKLRVYVSGGGCSGMQYGFAFEEAVNEDDTTVEKDGVVLLVDPTSLQYLQGAEIDYQEGLEGSRFVIKNPNATSSCSCGSSFSVDGGASCSSH.

3 residues coordinate iron-sulfur cluster: Cys47, Cys111, and Cys113.

Belongs to the HesB/IscA family. Homodimer. Requires iron-sulfur cluster as cofactor.

Functionally, required for insertion of 4Fe-4S clusters for at least IspG. This is Iron-sulfur cluster insertion protein ErpA 1 from Methylococcus capsulatus (strain ATCC 33009 / NCIMB 11132 / Bath).